Here is a 192-residue protein sequence, read N- to C-terminus: GTP cyclohydrolase-2 (192 aa).

Residue 50–54 (RLHSE) participates in GTP binding. Zn(2+) contacts are provided by C55, C66, and C68. Residues 92–94 (EGR) and T114 each bind GTP. Residue D126 is the Proton acceptor of the active site. R128 serves as the catalytic Nucleophile. T149 and K154 together coordinate GTP.

Belongs to the GTP cyclohydrolase II family. The cofactor is Zn(2+).

It catalyses the reaction GTP + 4 H2O = 2,5-diamino-6-hydroxy-4-(5-phosphoribosylamino)-pyrimidine + formate + 2 phosphate + 3 H(+). Its pathway is cofactor biosynthesis; riboflavin biosynthesis; 5-amino-6-(D-ribitylamino)uracil from GTP: step 1/4. Functionally, catalyzes the conversion of GTP to 2,5-diamino-6-ribosylamino-4(3H)-pyrimidinone 5'-phosphate (DARP), formate and pyrophosphate. This chain is GTP cyclohydrolase-2, found in Helicobacter pylori (strain P12).